We begin with the raw amino-acid sequence, 569 residues long: Probable pyruvate decarboxylase Pdc101 (569 aa).

The substrate site is built by D33 and H120. S233 carries the post-translational modification Phosphoserine. Residues 396–478 (DSWFNGLQMK…FLLNNRGYTI (83 aa)) are thiamine pyrophosphate binding. 3 residues coordinate Mg(2+): D446, N473, and G475. E479 contributes to the substrate binding site. Phosphothreonine is present on T521. At S522 the chain carries Phosphoserine.

Belongs to the TPP enzyme family. As to quaternary structure, homotetramer. The cofactor is a metal cation. Requires thiamine diphosphate as cofactor.

The catalysed reaction is a 2-oxocarboxylate + H(+) = an aldehyde + CO2. The sequence is that of Probable pyruvate decarboxylase Pdc101 (pdc101) from Schizosaccharomyces pombe (strain 972 / ATCC 24843) (Fission yeast).